Consider the following 185-residue polypeptide: Folate transporter FolT (185 aa).

The next 4 helical transmembrane spans lie at 34–54, 64–84, 114–134, and 157–177; these read LTVG…SLIA, LIAA…AFFV, VAVG…WLVM, and LIMF…QVIS.

As to quaternary structure, in E.coli forms a stable energy-coupling factor (ECF) transporter complex probably composed of a membrane-embedded substrate-binding protein (S component), two ATP-binding proteins (A components) and a transmembrane protein (T component).

The protein localises to the cell membrane. Folate-binding protein that interacts with the energy-coupling factor (ECF) ABC-transporter complex. Unlike classic ABC transporters this ECF transporter provides the energy necessary to transport a number of different substrates. The substrates themselves are bound by transmembrane, not extracytoplasmic soluble proteins. Upon coexpression with EcfA1A2T in E.coli allows 5-formyltetrahydrofolate uptake; uptake requires both FolT and EcfA1A2T. This is Folate transporter FolT (folT) from Leuconostoc mesenteroides subsp. mesenteroides (strain ATCC 8293 / DSM 20343 / BCRC 11652 / CCM 1803 / JCM 6124 / NCDO 523 / NBRC 100496 / NCIMB 8023 / NCTC 12954 / NRRL B-1118 / 37Y).